The sequence spans 267 residues: GTP cyclohydrolase FolE2 2 (267 aa).

Belongs to the GTP cyclohydrolase IV family.

It catalyses the reaction GTP + H2O = 7,8-dihydroneopterin 3'-triphosphate + formate + H(+). The protein operates within cofactor biosynthesis; 7,8-dihydroneopterin triphosphate biosynthesis; 7,8-dihydroneopterin triphosphate from GTP: step 1/1. Converts GTP to 7,8-dihydroneopterin triphosphate. The polypeptide is GTP cyclohydrolase FolE2 2 (Cupriavidus metallidurans (strain ATCC 43123 / DSM 2839 / NBRC 102507 / CH34) (Ralstonia metallidurans)).